Consider the following 504-residue polypeptide: AMP phosphorylase 1 (504 aa).

AMP-binding positions include glycine 169, 195–200 (SRAITS), and threonine 204. The active-site Proton donor is aspartate 257. Serine 265 and lysine 289 together coordinate AMP.

This sequence belongs to the thymidine/pyrimidine-nucleoside phosphorylase family. Type 2 subfamily.

It carries out the reaction AMP + phosphate = alpha-D-ribose 1,5-bisphosphate + adenine. The enzyme catalyses CMP + phosphate = cytosine + alpha-D-ribose 1,5-bisphosphate. The catalysed reaction is UMP + phosphate = alpha-D-ribose 1,5-bisphosphate + uracil. Its function is as follows. Catalyzes the conversion of AMP and phosphate to adenine and ribose 1,5-bisphosphate (R15P). Exhibits phosphorylase activity toward CMP and UMP in addition to AMP. Functions in an archaeal AMP degradation pathway, together with R15P isomerase and RubisCO. The sequence is that of AMP phosphorylase 1 from Archaeoglobus fulgidus (strain ATCC 49558 / DSM 4304 / JCM 9628 / NBRC 100126 / VC-16).